We begin with the raw amino-acid sequence, 171 residues long: Macro domain-containing protein RSc0334 (171 aa).

A Macro domain is found at 1 to 171 (MPIPTVTLRA…LYETALNEAR (171 aa)).

The protein belongs to the MacroD-type family.

The sequence is that of Macro domain-containing protein RSc0334 from Ralstonia nicotianae (strain ATCC BAA-1114 / GMI1000) (Ralstonia solanacearum).